A 591-amino-acid polypeptide reads, in one-letter code: uncharacterized protein (591 aa).

The signal sequence occupies residues Met-1–Ala-30. Residue Cys-31 is the site of N-palmitoyl cysteine attachment. Cys-31 carries S-diacylglycerol cysteine lipidation. Positions Lys-476 to Glu-488 are enriched in basic and acidic residues. Disordered regions lie at residues Lys-476–Asn-497 and Ser-510–Gly-535. Over residues Ser-510–Ser-523 the composition is skewed to low complexity.

The protein to T.pallidum TmpC.

Its subcellular location is the cell membrane. This is an uncharacterized protein from Mycoplasma genitalium (strain ATCC 33530 / DSM 19775 / NCTC 10195 / G37) (Mycoplasmoides genitalium).